Consider the following 217-residue polypeptide: Pyridoxine/pyridoxamine 5'-phosphate oxidase (217 aa).

Substrate-binding positions include R13–Y16 and K71. Residues R66–K71, Y81–T82, R87, K88, and Q110 each bind FMN. 3 residues coordinate substrate: Y128, R132, and S136. FMN is bound by residues Q145 to S146 and W190. R196–H198 contacts substrate. FMN is bound at residue R200.

This sequence belongs to the pyridoxamine 5'-phosphate oxidase family. Homodimer. It depends on FMN as a cofactor.

The catalysed reaction is pyridoxamine 5'-phosphate + O2 + H2O = pyridoxal 5'-phosphate + H2O2 + NH4(+). It catalyses the reaction pyridoxine 5'-phosphate + O2 = pyridoxal 5'-phosphate + H2O2. The protein operates within cofactor metabolism; pyridoxal 5'-phosphate salvage; pyridoxal 5'-phosphate from pyridoxamine 5'-phosphate: step 1/1. It participates in cofactor metabolism; pyridoxal 5'-phosphate salvage; pyridoxal 5'-phosphate from pyridoxine 5'-phosphate: step 1/1. Functionally, catalyzes the oxidation of either pyridoxine 5'-phosphate (PNP) or pyridoxamine 5'-phosphate (PMP) into pyridoxal 5'-phosphate (PLP). The protein is Pyridoxine/pyridoxamine 5'-phosphate oxidase of Photorhabdus laumondii subsp. laumondii (strain DSM 15139 / CIP 105565 / TT01) (Photorhabdus luminescens subsp. laumondii).